A 210-amino-acid chain; its full sequence is Ribosomal RNA small subunit methyltransferase G (210 aa).

Residues Gly-80, Leu-85, 131-132 (VE), and Arg-146 contribute to the S-adenosyl-L-methionine site.

This sequence belongs to the methyltransferase superfamily. RNA methyltransferase RsmG family.

The protein localises to the cytoplasm. The enzyme catalyses guanosine(527) in 16S rRNA + S-adenosyl-L-methionine = N(7)-methylguanosine(527) in 16S rRNA + S-adenosyl-L-homocysteine. Specifically methylates the N7 position of guanine in position 527 of 16S rRNA. The sequence is that of Ribosomal RNA small subunit methyltransferase G from Pasteurella multocida (strain Pm70).